A 48-amino-acid chain; its full sequence is Large ribosomal subunit protein bL32 (48 aa).

The disordered stretch occupies residues 1 to 20; the sequence is MAVPDRRVSKTRAAKRRTHY. The segment covering 9 to 20 has biased composition (basic residues); sequence SKTRAAKRRTHY.

Belongs to the bacterial ribosomal protein bL32 family.

This is Large ribosomal subunit protein bL32 from Helicobacter acinonychis (strain Sheeba).